The sequence spans 297 residues: 5'-3' exonuclease (297 aa).

The 5'-3' exonuclease domain occupies 171–262; that stretch reads EPDQIVDFKA…MKLEKELFAI (92 aa).

Functionally, 5'-3' exonuclease acting preferentially on double-stranded DNA. This is 5'-3' exonuclease (polA) from Mycoplasmopsis pulmonis (strain UAB CTIP) (Mycoplasma pulmonis).